The following is a 495-amino-acid chain: Two-component response regulator-like APRR3 (495 aa).

The Response regulatory domain maps to 65–183 (KVLLVENDDS…ELKNLWQHVW (119 aa)). Disordered stretches follow at residues 188–441 (SSSG…RWAQ) and 465–495 (HSRK…SEDN). Positions 206–217 (PESTQGSENDAS) are enriched in polar residues. Low complexity predominate over residues 231-248 (GLSNQDGGSDNGSGTQSS). The segment covering 256–265 (TKSTSPSNQF) has biased composition (polar residues). Residues 284–293 (RLKEAEDQKE) show a composition bias toward basic and acidic residues. A compositionally biased stretch (polar residues) spans 294-304 (QIGTGSQTGMS). The span at 307–319 (KKAEEPGDLEKNA) shows a compositional bias: basic and acidic residues. Residues 335-350 (NRSSGNSQVESKAPSS) show a composition bias toward polar residues. The stretch at 349 to 372 (SSNREDLQSLEQTLKKTREDRDYK) forms a coiled coil. Residues 351–378 (NREDLQSLEQTLKKTREDRDYKVGDRSV) show a composition bias toward basic and acidic residues. 2 stretches are compositionally biased toward polar residues: residues 380-395 (RHSN…NGAT) and 420-436 (GSSS…SSGS). The CCT domain maps to 442 to 484 (REAALMKFRLKRKERCFEKKVRYHSRKKLAEQRPHVKGQFIRK). The segment covering 483–495 (RKRDDHKSGSEDN) has biased composition (basic and acidic residues).

Belongs to the ARR-like family. As to quaternary structure, interacts with APRR1/TOC1 (via N-terminus). In terms of processing, phosphorylated by WNK1; during the night. Phosphorylation is required for optimal interaction with APRR1/TOC1.

It is found in the nucleus. Controls photoperiodic flowering response. Component of the circadian clock. Controls the degradation of APRR1/TOC1 by the SCF(ZTL) complex. Expression of several members of the ARR-like family is controlled by circadian rhythm. The particular coordinated sequential expression of APRR9, APRR7, APRR5, APRR3 and APPR1 result to circadian waves that may be at the basis of the endogenous circadian clock. The protein is Two-component response regulator-like APRR3 (APRR3) of Arabidopsis thaliana (Mouse-ear cress).